We begin with the raw amino-acid sequence, 163 residues long: Periplasmic nitrate reductase, electron transfer subunit (163 aa).

A signal peptide spans 1 to 32 (MRSQDPSRRLSRRLWTLFALALCLVTGTVALA). 8 residues coordinate heme c: H76, C90, C93, H94, H111, C130, C133, and H134.

It belongs to the NapB family. As to quaternary structure, component of the periplasmic nitrate reductase NapAB complex composed of NapA and NapB. Post-translationally, binds 2 heme C groups per subunit.

It localises to the periplasm. In terms of biological role, electron transfer subunit of the periplasmic nitrate reductase complex NapAB. Receives electrons from the membrane-anchored tetraheme c-type NapC protein and transfers these to NapA subunit, thus allowing electron flow between membrane and periplasm. Essential for periplasmic nitrate reduction with nitrate as the terminal electron acceptor. This is Periplasmic nitrate reductase, electron transfer subunit from Neorhizobium galegae (Rhizobium galegae).